A 525-amino-acid polypeptide reads, in one-letter code: GMP synthase [glutamine-hydrolyzing] (525 aa).

The 199-residue stretch at 9–207 folds into the Glutamine amidotransferase type-1 domain; it reads RILILDFGSQ…VLDVCQCEAL (199 aa). The active-site Nucleophile is the Cys-86. Residues His-181 and Glu-183 contribute to the active site. Residues 208–400 form the GMPS ATP-PPase domain; that stretch reads WTPASIIEDT…LGLPYDMLNR (193 aa). Residue 235-241 participates in ATP binding; it reads SGGVDSS.

In terms of assembly, homodimer.

It carries out the reaction XMP + L-glutamine + ATP + H2O = GMP + L-glutamate + AMP + diphosphate + 2 H(+). It participates in purine metabolism; GMP biosynthesis; GMP from XMP (L-Gln route): step 1/1. Catalyzes the synthesis of GMP from XMP. This Photorhabdus laumondii subsp. laumondii (strain DSM 15139 / CIP 105565 / TT01) (Photorhabdus luminescens subsp. laumondii) protein is GMP synthase [glutamine-hydrolyzing].